We begin with the raw amino-acid sequence, 755 residues long: Primary amine oxidase (755 aa).

An N-terminal signal peptide occupies residues 1 to 30 (MANGLKFSPRKTALALAVAVVCAWQSPVFA). Substrate-binding positions include 411–422 (YLDSGDYGMGTL) and 493–498 (VGNYDY). Residue Asp-413 is the Proton acceptor of the active site. The active-site Schiff-base intermediate with substrate; via topaquinone is the Tyr-496. Residue Tyr-496 is modified to 2',4',5'-topaquinone. Residues His-554 and His-556 each coordinate Cu cation. Residues Asp-563, Leu-564, Asp-565, Glu-603, Tyr-697, Asp-700, Glu-702, and Asp-708 each coordinate Ca(2+). Asp-563 is a binding site for Mn(2+). Residue Asp-565 participates in Mn(2+) binding. Mn(2+) is bound at residue Asp-708. His-719 provides a ligand contact to Cu cation.

It belongs to the copper/topaquinone oxidase family. Homodimer. It depends on Cu cation as a cofactor. Zn(2+) serves as cofactor. The cofactor is Ca(2+). Requires L-topaquinone as cofactor. Mn(2+) is required as a cofactor. In terms of processing, topaquinone (TPQ) is generated by copper-dependent autoxidation of a specific tyrosyl residue.

Its subcellular location is the periplasm. It carries out the reaction a primary methyl amine + O2 + H2O = an aldehyde + H2O2 + NH4(+). Functionally, active on tyramine, tryptamine, beta-phenethylamine and dopamine. This is Primary amine oxidase (maoA) from Klebsiella aerogenes (Enterobacter aerogenes).